The sequence spans 88 residues: MAHKKGVGSSKNGRESQSKRLGVKLFGGEVAKAGNIIVRQRGTVHHPGENVGIGKDHTLYALVDGVVTFRRGKENRSFVSVKEVVAEA.

Belongs to the bacterial ribosomal protein bL27 family.

The protein is Large ribosomal subunit protein bL27 of Parabacteroides distasonis (strain ATCC 8503 / DSM 20701 / CIP 104284 / JCM 5825 / NCTC 11152).